The chain runs to 1269 residues: Protein cramped-like (1269 aa).

Over residues M1 to E12 the composition is skewed to gly residues. The segment at M1–S165 is disordered. Composition is skewed to basic and acidic residues over residues D13 to D24 and S43 to P52. Pro residues predominate over residues P59–G74. Positions G105–S123 are enriched in gly residues. The segment covering S124–G147 has biased composition (low complexity). A compositionally biased stretch (basic and acidic residues) spans G151–S165. Residues R161 to T224 form the SANT domain. At S307 the chain carries Phosphoserine. Disordered stretches follow at residues I450–L541, D581–A666, V757–D827, E976–Q1034, I1055–E1092, and V1115–S1157. The segment covering S485 to D507 has biased composition (low complexity). Composition is skewed to basic and acidic residues over residues A508–D518 and T526–T535. Polar residues-rich tracts occupy residues V757–T767, T774–L806, and S982–H1002. 2 stretches are compositionally biased toward low complexity: residues I1055–P1070 and S1125–P1140. S1268 carries the phosphoserine modification.

The protein belongs to the cramped family.

The protein localises to the nucleus. This Homo sapiens (Human) protein is Protein cramped-like.